Consider the following 834-residue polypeptide: MDNTAITSQSSSTPLVCSVTPIIVGSPPSPANVIELSSPSTPPTPLTLLASLSETPSRKTTNPDTNGENTICHGVRQVRRVPRNNPVTGPSKEHKQRTRSPKTTTRREIKIVEGDRLIVGHDKREKKGETTKRMKKRDGVADKKLYARVSKVKSSENLDLDAKIPSSKVCNNTLPLVGDDMDNGSSELKLEQAIKRRHDWTPTREVTTPVVDVAELHSSPCGKAVTRMHGVGTLLSDYGFSGVVETSLGTKSESFRNAPTTKRPMELQKFSTVPAIPTPTESSTTEDVQGSSSKQQRVKAKKPQKGKLTTITSHATAKYCVADQTVDLDYIQNVAPKSPRRKNISNRPSGTKHSNSGRGKSSTLKNDNGRPVFRVVPPLEAFKSFEGQELLFGTSSQLERGYPEYPCDETQDTQNSPSNSAAVSELAVPYRISSEGKDLGSSLFGLSGSKNLWSASARDLTGAVFEGDEIDFQGASMGLSVLATKSRCHPGNRGPPRRNLVDVDNVPDKKLDIDTTEGENGNHSSVADNIVDRENLNPKISANTSETNLECAPQNKPAFSRFTTSELAKKVAAYGFKPIKSRDNMISLLEKCWETQSKTLILESKPNQGTDDARKNGFRKENHSDVRVRPDSATLANRRSPKKQQAKALSKFQEPNNFLPIENSTTTASMLPIISSHTILINDDQLSDSVGETVSFLPSLDHNGNGTTIQENMLEIKSPATPNARRSRQGSSSASFSIEPPSLASQITKAIKSQPRTRAFNGLKQPTWYEKILMYDPIQLEDLAAWLNTDGFGRIGEDREVGPGVVREWCESKGVCCVWKKQVSGRSHYLPMVS.

6 disordered regions span residues 80–105 (RVPR…KTTT), 272–307 (TVPA…QKGK), 332–372 (QNVA…GRPV), 401–421 (GYPE…SNSA), 603–649 (ESKP…AKAL), and 720–740 (ATPN…SIEP). Polar residues predominate over residues 279 to 295 (PTESSTTEDVQGSSSKQ). Basic residues predominate over residues 296 to 305 (QRVKAKKPQK). 2 stretches are compositionally biased toward polar residues: residues 345-366 (SNRP…TLKN) and 412-421 (DTQNSPSNSA). The span at 611–630 (DDARKNGFRKENHSDVRVRP) shows a compositional bias: basic and acidic residues. Residues 729–740 (QGSSSASFSIEP) are compositionally biased toward low complexity.

Belongs to the SLX4 family. Forms a heterodimer with SLX1. Phosphorylated in response to DNA damage.

It is found in the nucleus. In terms of biological role, regulatory subunit of the SLX1-SLX4 structure-specific endonuclease that resolves DNA secondary structures generated during DNA repair and recombination. Has endonuclease activity towards branched DNA substrates, introducing single-strand cuts in duplex DNA close to junctions with ss-DNA. In Ajellomyces capsulatus (strain NAm1 / WU24) (Darling's disease fungus), this protein is Structure-specific endonuclease subunit SLX4.